Reading from the N-terminus, the 354-residue chain is Peptide chain release factor 1 (354 aa).

N5-methylglutamine is present on Gln230.

It belongs to the prokaryotic/mitochondrial release factor family. Post-translationally, methylated by PrmC. Methylation increases the termination efficiency of RF1.

It is found in the cytoplasm. Its function is as follows. Peptide chain release factor 1 directs the termination of translation in response to the peptide chain termination codons UAG and UAA. This is Peptide chain release factor 1 from Rhodospirillum rubrum (strain ATCC 11170 / ATH 1.1.1 / DSM 467 / LMG 4362 / NCIMB 8255 / S1).